We begin with the raw amino-acid sequence, 201 residues long: 3-isopropylmalate dehydratase small subunit (201 aa).

This sequence belongs to the LeuD family. LeuD type 1 subfamily. In terms of assembly, heterodimer of LeuC and LeuD.

It carries out the reaction (2R,3S)-3-isopropylmalate = (2S)-2-isopropylmalate. It functions in the pathway amino-acid biosynthesis; L-leucine biosynthesis; L-leucine from 3-methyl-2-oxobutanoate: step 2/4. In terms of biological role, catalyzes the isomerization between 2-isopropylmalate and 3-isopropylmalate, via the formation of 2-isopropylmaleate. This Shewanella sp. (strain ANA-3) protein is 3-isopropylmalate dehydratase small subunit.